The primary structure comprises 318 residues: Pseudouridine-5'-phosphate glycosidase 1 (318 aa).

The active-site Proton donor is the Glu29. 2 residues coordinate substrate: Lys90 and Val110. Asp142 provides a ligand contact to Mn(2+). Position 144-146 (144-146 (SAD)) interacts with substrate. Lys163 serves as the catalytic Nucleophile.

It belongs to the pseudouridine-5'-phosphate glycosidase family. In terms of assembly, homotrimer. The cofactor is Mn(2+).

The enzyme catalyses D-ribose 5-phosphate + uracil = psi-UMP + H2O. Functionally, catalyzes the reversible cleavage of pseudouridine 5'-phosphate (PsiMP) to ribose 5-phosphate and uracil. Functions biologically in the cleavage direction, as part of a pseudouridine degradation pathway. In Photorhabdus laumondii subsp. laumondii (strain DSM 15139 / CIP 105565 / TT01) (Photorhabdus luminescens subsp. laumondii), this protein is Pseudouridine-5'-phosphate glycosidase 1.